Reading from the N-terminus, the 33-residue chain is MPRRRRSSRPPVRRRRRPRVSRRRRRRGGRRRR.

Residues 1-33 (MPRRRRSSRPPVRRRRRPRVSRRRRRRGGRRRR) form a disordered region.

As to expression, testis.

It localises to the nucleus. The protein resides in the chromosome. Functionally, protamines substitute for histones in the chromatin of sperm during the haploid phase of spermatogenesis. They compact sperm DNA into a highly condensed, stable and inactive complex. The polypeptide is Protamine TP14 (Oncorhynchus mykiss (Rainbow trout)).